The chain runs to 387 residues: Putative protein FAM157C (387 aa).

Disordered regions lie at residues 1-21 (MGPL…PLPK), 182-226 (TARP…GAEP), and 329-353 (RARD…TSSG).

It belongs to the FAM157 family.

The polypeptide is Putative protein FAM157C (FAM157C) (Homo sapiens (Human)).